A 154-amino-acid chain; its full sequence is Crossover junction endodeoxyribonuclease RuvC (154 aa).

Catalysis depends on residues Asp-7, Glu-66, and Asp-139. The Mg(2+) site is built by Asp-7, Glu-66, and Asp-139.

The protein belongs to the RuvC family. As to quaternary structure, homodimer which binds Holliday junction (HJ) DNA. The HJ becomes 2-fold symmetrical on binding to RuvC with unstacked arms; it has a different conformation from HJ DNA in complex with RuvA. In the full resolvosome a probable DNA-RuvA(4)-RuvB(12)-RuvC(2) complex forms which resolves the HJ. Requires Mg(2+) as cofactor.

The protein localises to the cytoplasm. It carries out the reaction Endonucleolytic cleavage at a junction such as a reciprocal single-stranded crossover between two homologous DNA duplexes (Holliday junction).. The RuvA-RuvB-RuvC complex processes Holliday junction (HJ) DNA during genetic recombination and DNA repair. Endonuclease that resolves HJ intermediates. Cleaves cruciform DNA by making single-stranded nicks across the HJ at symmetrical positions within the homologous arms, yielding a 5'-phosphate and a 3'-hydroxyl group; requires a central core of homology in the junction. The consensus cleavage sequence is 5'-(A/T)TT(C/G)-3'. Cleavage occurs on the 3'-side of the TT dinucleotide at the point of strand exchange. HJ branch migration catalyzed by RuvA-RuvB allows RuvC to scan DNA until it finds its consensus sequence, where it cleaves and resolves the cruciform DNA. The polypeptide is Crossover junction endodeoxyribonuclease RuvC (Aliarcobacter butzleri (strain RM4018) (Arcobacter butzleri)).